Here is a 50-residue protein sequence, read N- to C-terminus: U3-ctenitoxin-Asp1a (50 aa).

Expressed by the venom gland.

The protein resides in the secreted. Functionally, possible neurotoxin. In Ancylometes sp. (South American fishing spider), this protein is U3-ctenitoxin-Asp1a.